Reading from the N-terminus, the 96-residue chain is uncharacterized protein (96 aa).

The N-terminal stretch at 1–30 (MLILSVFCAVFYAFLTAIVANFSLKTLAIG) is a signal peptide. Residues 31–54 (ATFVKSHLKSNPIPYGDLVADSLD) lie on the Extracellular side of the membrane. Residues 55-75 (FGNITPTVTLLFAILIAVLAL) traverse the membrane as a helical segment. The Cytoplasmic segment spans residues 76-96 (KCEFSCSTSAPAGQASGRKVK).

The protein localises to the membrane. This is an uncharacterized protein from Dictyostelium discoideum (Social amoeba).